The following is a 437-amino-acid chain: Transcriptional modulator WTM1 (437 aa).

The WD 1 repeat unit spans residues tyrosine 103–isoleucine 144. Threonine 187 is subject to Phosphothreonine. Serine 200 is modified (phosphoserine). 3 WD repeats span residues proline 221 to tryptophan 259, proline 264 to threonine 304, and alanine 326 to asparagine 366. The tract at residues aspartate 368–arginine 404 is disordered. Threonine 370 carries the phosphothreonine modification. A compositionally biased stretch (basic residues) spans arginine 387–glycine 402. Residue threonine 406 is modified to Phosphothreonine.

As to quaternary structure, interacts with KAP122.

It is found in the cytoplasm. The protein resides in the nucleus. Functionally, transcriptional modulator with roles in meiotic regulation and silencing. Acts either as an adapter to facilitate nuclear import by KAP122 of the RNR2-RNR4 heterodimer, also called beta-beta' subunit, which corresponds to the small subunit of the ribonucleotide reductase (RNR); or as an anchor to retain RNR2-RNR4 in the nucleus. The polypeptide is Transcriptional modulator WTM1 (WTM1) (Saccharomyces cerevisiae (strain ATCC 204508 / S288c) (Baker's yeast)).